Here is a 370-residue protein sequence, read N- to C-terminus: Anhydro-N-acetylmuramic acid kinase (370 aa).

Position 13 to 20 (13 to 20 (GTSLDGVD)) interacts with ATP.

This sequence belongs to the anhydro-N-acetylmuramic acid kinase family.

The enzyme catalyses 1,6-anhydro-N-acetyl-beta-muramate + ATP + H2O = N-acetyl-D-muramate 6-phosphate + ADP + H(+). The protein operates within amino-sugar metabolism; 1,6-anhydro-N-acetylmuramate degradation. It participates in cell wall biogenesis; peptidoglycan recycling. Catalyzes the specific phosphorylation of 1,6-anhydro-N-acetylmuramic acid (anhMurNAc) with the simultaneous cleavage of the 1,6-anhydro ring, generating MurNAc-6-P. Is required for the utilization of anhMurNAc either imported from the medium or derived from its own cell wall murein, and thus plays a role in cell wall recycling. The sequence is that of Anhydro-N-acetylmuramic acid kinase from Vibrio cholerae serotype O1 (strain ATCC 39315 / El Tor Inaba N16961).